Reading from the N-terminus, the 280-residue chain is Acetylglutamate kinase (280 aa).

Substrate contacts are provided by residues 57-58 (GG), Arg-79, and Asn-174.

Belongs to the acetylglutamate kinase family. ArgB subfamily.

Its subcellular location is the cytoplasm. It catalyses the reaction N-acetyl-L-glutamate + ATP = N-acetyl-L-glutamyl 5-phosphate + ADP. It functions in the pathway amino-acid biosynthesis; L-arginine biosynthesis; N(2)-acetyl-L-ornithine from L-glutamate: step 2/4. Catalyzes the ATP-dependent phosphorylation of N-acetyl-L-glutamate. The polypeptide is Acetylglutamate kinase (Helicobacter hepaticus (strain ATCC 51449 / 3B1)).